A 484-amino-acid polypeptide reads, in one-letter code: ATP synthase subunit beta (484 aa).

An ATP-binding site is contributed by 162–169 (GGAGVGKT).

It belongs to the ATPase alpha/beta chains family. In terms of assembly, F-type ATPases have 2 components, CF(1) - the catalytic core - and CF(0) - the membrane proton channel. CF(1) has five subunits: alpha(3), beta(3), gamma(1), delta(1), epsilon(1). CF(0) has four main subunits: a(1), b(1), b'(1) and c(9-12).

It is found in the cellular thylakoid membrane. The catalysed reaction is ATP + H2O + 4 H(+)(in) = ADP + phosphate + 5 H(+)(out). In terms of biological role, produces ATP from ADP in the presence of a proton gradient across the membrane. The catalytic sites are hosted primarily by the beta subunits. The protein is ATP synthase subunit beta of Synechococcus elongatus (strain ATCC 33912 / PCC 7942 / FACHB-805) (Anacystis nidulans R2).